A 279-amino-acid polypeptide reads, in one-letter code: Methyltransferase trt5 (279 aa).

Residues 124–125 and 152–153 each bind S-adenosyl-L-methionine; these read DI and DV.

This sequence belongs to the class I-like SAM-binding methyltransferase superfamily. In terms of assembly, homodimer.

The protein operates within secondary metabolite biosynthesis; terpenoid biosynthesis. Its function is as follows. Methyltransferase; part of the gene cluster that mediates the biosynthesis of terretonin, a fungal meroterpenoid that acts as a mycotoxin. The first step of the pathway is the synthesis of 3,5-dimethylorsellinic acid (DMOA) by the polyketide synthase trt4. DMOA is then prenylated into farnesyl-DMOA by the polyprenyl transferase trt2. Methylation by the methyltransferase trt5 then leads to farnesyl-DMOA methyl ester which is further subject to epoxidation by the FAD-dependent monooxygenase trt8 to yield epoxyfarnesyl-DMOA methyl ester. Cyclization of epoxyfarnesyl-DMOA methyl ester by the terpene cyclase trt1 leads to a tetracycle intermediate which is in turn converted to preterretonin. Dehydrogenase trt9 comes next to transform preterretonin to preterrenoid. The FAD-dependent monooxygenase trt3 is then required for the C-hydroxylation at C16 of preterrenoid to yield terrenoid. The cytochrome P450 trt6 catalyzes three successive oxidations to transform terrenoid into an unstable intermediate, which then undergoes the D-ring expansion and unusual rearrangement of the methoxy group to afford the core skeleton of terretonin. Trt14 catalyzes the D-ring expansion of terretonin involving intramolecular methoxy rearrangement as well as the hydrolysis of the expanded D-ring and the methyl ester moiety. Finally, the nonheme iron-dependent dioxygenase trt7 accomplishes the last two oxidation reactions steps to complete the biosynthesis of terretonin. Terretonin C is produced via spontaneous decarboxylation of the terretonin precursor. Another shunt product of the terretonin biosynthesis is dihydrofarnesyl-DMOA, derived from epoxyfarnesyl-DMOA through hydrolysis of the epoxide. In Aspergillus terreus (strain NIH 2624 / FGSC A1156), this protein is Methyltransferase trt5.